Consider the following 27-residue polypeptide: Antimicrobial peptide 1 (27 aa).

In terms of tissue distribution, expressed by the skin glands.

It localises to the secreted. Functionally, has very weak antimicrobial activity against Gram-positive bacterium S.aureus and Gram-negative bacterium E.coli and stronger activity against yeast C.albicans. Enhances the antibacterial activity of XT3. Has hemolytic activity against human red blood cells. The protein is Antimicrobial peptide 1 of Xenopus tropicalis (Western clawed frog).